A 214-amino-acid polypeptide reads, in one-letter code: SH3 domain-binding glutamic acid-rich protein (214 aa).

Residues 61–67 (NGIPLPP) carry the SH3-binding motif. A disordered region spans residues 101 to 214 (PGSKVTKSEE…EEEAGEGEDS (114 aa)). Residues 129-144 (GTEKAEKSGENEAQKE) are compositionally biased toward basic and acidic residues. 2 stretches are compositionally biased toward acidic residues: residues 162-192 (EGEDGEEGEEGEEREEGGEGETTGETEEAPE) and 198-214 (EAEEEEPEEEAGEGEDS).

Belongs to the SH3BGR family.

The protein is SH3 domain-binding glutamic acid-rich protein (Sh3bgr) of Mus musculus (Mouse).